A 319-amino-acid chain; its full sequence is Ribonucleoside-diphosphate reductase small chain (319 aa).

Residues aspartate 70, glutamate 101, and histidine 104 each coordinate Fe cation. Tyrosine 108 is an active-site residue. Fe cation is bound by residues glutamate 163, glutamate 197, and histidine 200. Positions 313–319 are interaction with R1; it reads FSLDVDF.

This sequence belongs to the ribonucleoside diphosphate reductase small chain family. As to quaternary structure, interacts with RNR1/OPG080 subunit. Can interact with host RNR1 supunit. Fe cation is required as a cofactor.

The catalysed reaction is a 2'-deoxyribonucleoside 5'-diphosphate + [thioredoxin]-disulfide + H2O = a ribonucleoside 5'-diphosphate + [thioredoxin]-dithiol. Its function is as follows. Ribonucleoside-diphosphate reductase holoenzyme provides the precursors necessary for viral DNA synthesis. Allows virus growth in non-dividing cells. Catalyzes the biosynthesis of deoxyribonucleotides from the corresponding ribonucleotides. The polypeptide is Ribonucleoside-diphosphate reductase small chain (OPG048) (Bos taurus (Bovine)).